Here is a 152-residue protein sequence, read N- to C-terminus: Histone deacetylase complex subunit SAP18 (152 aa).

A disordered region spans residues 1–38 (MAEAARRQGGGRPLPPPPRGVNQQPPRPKPEPVDREKT). The span at 28-38 (PKPEPVDREKT) shows a compositional bias: basic and acidic residues.

This sequence belongs to the SAP18 family. As to quaternary structure, interacts with SIN3, ERF3, ERF4 and HDA19. In terms of tissue distribution, ubiquitous, with low level in flowers.

Its function is as follows. Links the histone deacetylase complex to transcriptional repressors bound to chromatin. Involved in the tethering of the SIN3 complex to core histone proteins. The chain is Histone deacetylase complex subunit SAP18 from Arabidopsis thaliana (Mouse-ear cress).